A 128-amino-acid polypeptide reads, in one-letter code: Sulfurtransferase TusD (128 aa).

Cys-78 functions as the Cysteine persulfide intermediate in the catalytic mechanism.

This sequence belongs to the DsrE/TusD family. As to quaternary structure, heterohexamer, formed by a dimer of trimers. The hexameric TusBCD complex contains 2 copies each of TusB, TusC and TusD. The TusBCD complex interacts with TusE.

It is found in the cytoplasm. In terms of biological role, part of a sulfur-relay system required for 2-thiolation of 5-methylaminomethyl-2-thiouridine (mnm(5)s(2)U) at tRNA wobble positions. Accepts sulfur from TusA and transfers it in turn to TusE. This chain is Sulfurtransferase TusD, found in Citrobacter koseri (strain ATCC BAA-895 / CDC 4225-83 / SGSC4696).